Here is a 244-residue protein sequence, read N- to C-terminus: RNA transcription, translation and transport factor protein (244 aa).

N6-acetyllysine occurs at positions 20, 62, and 98.

It belongs to the RTRAF family. Homodimer. Interacts with FAM98A (via N- and C-terminus). Interacts with NIN; which may prevent phosphorylation of NIN. Interacts with POLR2A. Component of a tRNA-splicing ligase complex with FAM98B, DDX1 and RTCB. In terms of assembly, (Microbial infection) Interacts with influenza A virus (IAV) RNA polymerase subunits PA, PB1 and PB2, and nucleocapsid NP. Associates with IAV polymerase complexes both in the nucleus and cytosol. Associates with IAV ribonucleoproteins (vRNP) packaged in virions. Interacts with hepatitis C virus core protein p19. As to expression, widely expressed. Expressed at high level in heart and skeletal muscle. Expressed at intermediate level in liver, pancreas, fetal brain and fetal lung. Weakly expressed in adult brain, adult lung, placenta, fetal liver and fetal kidney. Overexpressed in many brain tumors.

It localises to the nucleus. The protein localises to the cytoplasm. Its subcellular location is the cytosol. It is found in the perinuclear region. The protein resides in the cytoskeleton. It localises to the microtubule organizing center. The protein localises to the centrosome. In terms of biological role, RNA-binding protein involved in modulation of mRNA transcription by Polymerase II. Component of the tRNA-splicing ligase complex and is required for tRNA ligation. May be required for RNA transport. Its function is as follows. (Microbial infection) In case of infection by influenza virus A (IVA), is involved in viral replication. This is RNA transcription, translation and transport factor protein from Homo sapiens (Human).